Consider the following 549-residue polypeptide: GATA-type transcription factor sreA (549 aa).

Residues 40–100 (AQAGREHPQD…TSPKSQKDTS (61 aa)) form a disordered region. Composition is skewed to basic and acidic residues over residues 43 to 72 (GREHPQDRHYTDNGSRKSEAGAPHSHHEGE) and 86 to 97 (HHVEKTSPKSQK). A GATA-type 1 zinc finger spans residues 106–130 (CSNCGTKSTPLWRRSPTGAMICNAC). The interval 141-174 (RPTKRNRTQASPEAYHPQNQSVGSQPDPAVTGSE) is disordered. Residues 180–198 (CPGGGNCNGTGGAEGCDGC) are cystein-rich region (CRR). The interval 223–244 (GNSDAVPSPEAEAPARNSGQPE) is disordered. The GATA-type 2 zinc finger occupies 251 to 275 (CQNCGTTVTPLWRRDENGHPICNAC). Disordered stretches follow at residues 306–332 (RENSPTAATHSSHGSSASPEASSPATL), 375–459 (NSGA…RLSS), and 482–535 (LGRQ…MREQ). Low complexity predominate over residues 309 to 331 (SPTAATHSSHGSSASPEASSPAT). Residues 383-396 (HHPPPPRLLEPGHP) show a composition bias toward pro residues. Residues 485–497 (QQQSQPHHPQSSP) are compositionally biased toward low complexity. Polar residues predominate over residues 498–515 (LAPTQAASQSLPGVSNMD). Residues 511–549 (VSNMDNHVEDRRAKLQREAEEMREQLRAKERELAELAGQ) are a coiled coil. Basic and acidic residues predominate over residues 516-535 (NHVEDRRAKLQREAEEMREQ).

It localises to the nucleus. Its function is as follows. GATA-type transcription repressor that regulates iron- acquisition genes through specific binding GATA sequence elements of target promoters. Iron acquisition regulation is critical for survival under both iron-limiting conditions (to acquire essential iron) and iron-replete conditions (to limit iron toxicity). SreA targets include genes encoding a number of key iron-regulated factors such as those involved in siderophore biosynthesis. The protein is GATA-type transcription factor sreA of Emericella nidulans (strain FGSC A4 / ATCC 38163 / CBS 112.46 / NRRL 194 / M139) (Aspergillus nidulans).